We begin with the raw amino-acid sequence, 28 residues long: uncharacterized protein (28 aa).

It is found in the cell inner membrane. This is an uncharacterized protein from Escherichia coli (strain K12).